Here is a 240-residue protein sequence, read N- to C-terminus: Lactate utilization protein C (240 aa).

It belongs to the LutC/YkgG family.

In terms of biological role, is involved in L-lactate degradation and allows cells to grow with lactate as the sole carbon source. This chain is Lactate utilization protein C, found in Geobacillus thermodenitrificans (strain NG80-2).